We begin with the raw amino-acid sequence, 204 residues long: MVDFILNAQVRSDLGKGASRRLRRNAAQVPAVIYGGDKEPQSVTLELREIAKLLENEAAFSHVIALNVGGAKETVLIKALQRHPAKGFVMHADFLRVVADHKLTAHVPLHFINEDVAVGVKQAGGEISHTISEVEVSCLPKDLPEFIEVDMAKVELGQIVHLSDLKAPKGVELVQLAHGNDLAVANIHASRVVKEEGSEEGAAE.

The protein belongs to the bacterial ribosomal protein bL25 family. CTC subfamily. As to quaternary structure, part of the 50S ribosomal subunit; part of the 5S rRNA/L5/L18/L25 subcomplex. Contacts the 5S rRNA. Binds to the 5S rRNA independently of L5 and L18.

This is one of the proteins that binds to the 5S RNA in the ribosome where it forms part of the central protuberance. This chain is Large ribosomal subunit protein bL25, found in Pseudomonas paraeruginosa (strain DSM 24068 / PA7) (Pseudomonas aeruginosa (strain PA7)).